Reading from the N-terminus, the 382-residue chain is Nitric oxide reductase FlRd-NAD(+) reductase (382 aa).

Belongs to the FAD-dependent oxidoreductase family. FAD serves as cofactor.

The protein localises to the cytoplasm. The catalysed reaction is 2 reduced [nitric oxide reductase rubredoxin domain] + NAD(+) + H(+) = 2 oxidized [nitric oxide reductase rubredoxin domain] + NADH. It functions in the pathway nitrogen metabolism; nitric oxide reduction. One of at least two accessory proteins for anaerobic nitric oxide (NO) reductase. Reduces the rubredoxin moiety of NO reductase. This chain is Nitric oxide reductase FlRd-NAD(+) reductase, found in Vibrio vulnificus (strain CMCP6).